Here is a 216-residue protein sequence, read N- to C-terminus: L-fuculose phosphate aldolase (216 aa).

Substrate contacts are provided by residues Gly28–Asn29, Thr43–Gly44, and Ser71–Ser72. Residue Glu73 is the Proton donor/acceptor of the active site. Positions 73, 92, 94, and 155 each coordinate Zn(2+).

Belongs to the aldolase class II family. AraD/FucA subfamily. As to quaternary structure, homotetramer. Requires Zn(2+) as cofactor.

It carries out the reaction L-fuculose 1-phosphate = (S)-lactaldehyde + dihydroxyacetone phosphate. Its pathway is carbohydrate degradation; L-fucose degradation; L-lactaldehyde and glycerone phosphate from L-fucose: step 3/3. Functionally, involved in the degradation of L-fucose and D-arabinose. Catalyzes the reversible cleavage of L-fuculose 1-phosphate (Fuc1P) to yield dihydroxyacetone phosphate (DHAP) and L-lactaldehyde. In Haemophilus influenzae (strain ATCC 51907 / DSM 11121 / KW20 / Rd), this protein is L-fuculose phosphate aldolase.